Consider the following 175-residue polypeptide: Protein LHCP TRANSLOCATION DEFECT (175 aa).

The N-terminal 68 residues, 1–68 (MASSSISFSC…WFKFGKNGVD (68 aa)), are a transit peptide targeting the chloroplast. The stretch at 117-149 (PVDILLMLAATEGDRPKIEELLKAGADYSVKDA) is one ANK repeat.

Interacts with CAO/cpSRP43, but is not a component of the transit complex. Interacts with LHCP (via T14 domain), TIC40 and TIC110. In terms of tissue distribution, highly expressed in leaves and seedlings. Detected in roots, but not in germinating seeds.

The protein localises to the plastid. It is found in the chloroplast thylakoid membrane. Its subcellular location is the chloroplast envelope. It localises to the chloroplast stroma. Functionally, involved in the import of light-harvesting complex proteins (LHCP) and subsequent routing of these proteins to the chloroplast signal recognition particle (SRP) pathway. The chain is Protein LHCP TRANSLOCATION DEFECT (LTD) from Arabidopsis thaliana (Mouse-ear cress).